The primary structure comprises 729 residues: Carbon monoxide dehydrogenase/acetyl-CoA synthase subunit alpha (729 aa).

The [4Fe-4S] cluster site is built by Cys506, Cys509, Cys518, and Cys528. Cys509 is a Ni(2+) binding site. 3 residues coordinate Ni(2+): Cys595, Gly596, and Cys597.

As to quaternary structure, tetramer of two alpha and two beta chains. Requires Ni cation as cofactor. [4Fe-4S] cluster serves as cofactor.

It catalyses the reaction Co(I)-[corrinoid Fe-S protein] + acetyl-CoA + H(+) = methyl-Co(III)-[corrinoid Fe-S protein] + CO + CoA. The beta subunit generates CO from CO(2), while the alpha subunit (this protein) combines the CO with CoA and a methyl group to form acetyl-CoA. The methyl group, which is incorporated into acetyl-CoA, is transferred to the alpha subunit by a corrinoid iron-sulfur protein. The polypeptide is Carbon monoxide dehydrogenase/acetyl-CoA synthase subunit alpha (Moorella thermoacetica (Clostridium thermoaceticum)).